A 318-amino-acid chain; its full sequence is BES1/BZR1 homolog protein 2 (318 aa).

Residues 1–13 show a composition bias toward gly residues; sequence MAAGGGGGGGGSS. Disordered regions lie at residues 1–34, 84–133, 166–195, and 209–231; these read MAAG…RRRR, FKPP…PSPS, NSAP…PNGG, and APSS…CDES. Positions 16-97 are required for DNA-binding; that stretch reads RTPTWKEREN…ASDISGTPTN (82 aa). Residues 91–101 are compositionally biased toward polar residues; the sequence is ISGTPTNFSTN. The segment covering 102-133 has biased composition (low complexity); that stretch reads SSIQPSPQSSAFPSPAPSYHGSPVSSSFPSPS.

Belongs to the BZR/LAT61 family. In terms of processing, phosphorylated. Phosphorylation increases protein degradation.

The chain is BES1/BZR1 homolog protein 2 (BEH2) from Arabidopsis thaliana (Mouse-ear cress).